Here is a 442-residue protein sequence, read N- to C-terminus: Protein translocase subunit SecF (442 aa).

Positions 1 to 39 (MASKAKTGRDDEATSAVELTEATESAVARTDGDSTTDTA) are disordered. The next 6 helical transmembrane spans lie at 67–87 (WFGVSGAIVAVAIASIVFRGF), 187–207 (ITKKAVIALVVFLVLVALYIT), 218–238 (AITAMLFDLTVTAGVYSLVGF), 243–263 (ATVIGLLTILGFSLYDTVIVF), 301–321 (LIGVLPVLALMLVAVWLLGVG), and 331–351 (LIGIIIGTYSSIFFATPLLVT). A disordered region spans residues 366-442 (VLKRRNSGSP…PTGKRNAGRR (77 aa)). Over residues 402–432 (QASSQSAPRAAQGSSKPAPGARPVRPVGTRR) the composition is skewed to low complexity. Basic residues predominate over residues 433 to 442 (PTGKRNAGRR).

The protein belongs to the SecD/SecF family. SecF subfamily. As to quaternary structure, forms a complex with SecD. Part of the essential Sec protein translocation apparatus which comprises SecA, SecYEG and auxiliary proteins SecDF. Other proteins may also be involved.

It localises to the cell membrane. In terms of biological role, part of the Sec protein translocase complex. Interacts with the SecYEG preprotein conducting channel. SecDF uses the proton motive force (PMF) to complete protein translocation after the ATP-dependent function of SecA. This Mycobacterium tuberculosis (strain CDC 1551 / Oshkosh) protein is Protein translocase subunit SecF.